A 203-amino-acid chain; its full sequence is GTP cyclohydrolase-2 (203 aa).

49-53 (RIHSE) is a binding site for GTP. Zn(2+) contacts are provided by C54, C65, and C67. GTP-binding positions include Q70, 92 to 94 (EGR), and T114. Residue D126 is the Proton acceptor of the active site. The active-site Nucleophile is the R128. GTP contacts are provided by T149 and K154.

Belongs to the GTP cyclohydrolase II family. Requires Zn(2+) as cofactor.

The catalysed reaction is GTP + 4 H2O = 2,5-diamino-6-hydroxy-4-(5-phosphoribosylamino)-pyrimidine + formate + 2 phosphate + 3 H(+). The protein operates within cofactor biosynthesis; riboflavin biosynthesis; 5-amino-6-(D-ribitylamino)uracil from GTP: step 1/4. Catalyzes the conversion of GTP to 2,5-diamino-6-ribosylamino-4(3H)-pyrimidinone 5'-phosphate (DARP), formate and pyrophosphate. This chain is GTP cyclohydrolase-2, found in Shewanella sp. (strain MR-7).